Here is a 493-residue protein sequence, read N- to C-terminus: Cysteine sulfinic acid decarboxylase (493 aa).

The residue at position 305 (K305) is an N6-(pyridoxal phosphate)lysine.

The protein belongs to the group II decarboxylase family. In terms of assembly, homodimer. Requires pyridoxal 5'-phosphate as cofactor. In terms of tissue distribution, expressed in brain, liver and kidney.

It carries out the reaction L-aspartate + H(+) = beta-alanine + CO2. The enzyme catalyses 3-sulfino-L-alanine + H(+) = hypotaurine + CO2. The catalysed reaction is L-cysteate + H(+) = taurine + CO2. It participates in organosulfur biosynthesis; taurine biosynthesis; hypotaurine from L-cysteine: step 2/2. Catalyzes the decarboxylation of L-aspartate, 3-sulfino-L-alanine (cysteine sulfinic acid), and L-cysteate to beta-alanine, hypotaurine and taurine, respectively. The preferred substrate is 3-sulfino-L-alanine. Does not exhibit any decarboxylation activity toward glutamate. The chain is Cysteine sulfinic acid decarboxylase (Csad) from Rattus norvegicus (Rat).